The chain runs to 275 residues: MQQIQRDIAQALQVQPPFQSEADVQAQIARRIAFIQQCLKDSGLKTLVLGISGGVDSLTAGLLAQRAVEQLREQTGDQAYRFIAVRLPYQVQQDEADAQASLATIRADEEQTVNIGPSVKALAEQLEALEGLEPAKSDFVIGNIKARIRMVAQYAIAGARGGLVIGTDHAAEAVMGFFTKFGDGACDLAPLSGLAKHQVRALARALGAPENLVEKIPTADLEDLRPGHPDEASHGVTYAEIDAFLHGQPLREEAARVIVDTYHKTQHKRELPKAP.

50 to 57 (GISGGVDS) is an ATP binding site. Aspartate 56 serves as a coordination point for Mg(2+). A deamido-NAD(+)-binding site is contributed by arginine 147. Threonine 167 is a binding site for ATP. Glutamate 172 contributes to the Mg(2+) binding site. Lysine 180 and aspartate 187 together coordinate deamido-NAD(+). Residues lysine 196 and threonine 218 each coordinate ATP. 267-268 (HK) is a binding site for deamido-NAD(+).

Belongs to the NAD synthetase family. Homodimer.

The enzyme catalyses deamido-NAD(+) + NH4(+) + ATP = AMP + diphosphate + NAD(+) + H(+). Its pathway is cofactor biosynthesis; NAD(+) biosynthesis; NAD(+) from deamido-NAD(+) (ammonia route): step 1/1. In terms of biological role, catalyzes the ATP-dependent amidation of deamido-NAD to form NAD. Uses ammonia as a nitrogen source. The chain is NH(3)-dependent NAD(+) synthetase from Pseudomonas aeruginosa (strain LESB58).